The chain runs to 711 residues: Polyribonucleotide nucleotidyltransferase (711 aa).

Positions 486 and 492 each coordinate Mg(2+). Residues 553–612 (PRIHTIKISPDKIKDVIGKGGSVIRALTEETGTTIEIEDDGTVKIAATDGEKAKFAIRRI) form the KH domain. In terms of domain architecture, S1 motif spans 622-690 (GRIYNGKVTR…RQGRVRLSIK (69 aa)). The disordered stretch occupies residues 690-711 (KEATEQTQPAAAPEAPAAEQGE). The segment covering 694–711 (EQTQPAAAPEAPAAEQGE) has biased composition (low complexity).

It belongs to the polyribonucleotide nucleotidyltransferase family. Component of the RNA degradosome, which is a multiprotein complex involved in RNA processing and mRNA degradation. Mg(2+) serves as cofactor.

Its subcellular location is the cytoplasm. The catalysed reaction is RNA(n+1) + phosphate = RNA(n) + a ribonucleoside 5'-diphosphate. In terms of biological role, involved in mRNA degradation. Catalyzes the phosphorolysis of single-stranded polyribonucleotides processively in the 3'- to 5'-direction. This is Polyribonucleotide nucleotidyltransferase from Enterobacter sp. (strain 638).